The sequence spans 89 residues: Small ribosomal subunit protein uS15 (89 aa).

The protein belongs to the universal ribosomal protein uS15 family. Part of the 30S ribosomal subunit. Forms a bridge to the 50S subunit in the 70S ribosome, contacting the 23S rRNA.

Its function is as follows. One of the primary rRNA binding proteins, it binds directly to 16S rRNA where it helps nucleate assembly of the platform of the 30S subunit by binding and bridging several RNA helices of the 16S rRNA. In terms of biological role, forms an intersubunit bridge (bridge B4) with the 23S rRNA of the 50S subunit in the ribosome. The sequence is that of Small ribosomal subunit protein uS15 from Prochlorococcus marinus (strain MIT 9215).